The sequence spans 149 residues: Large ribosomal subunit protein bL9 (149 aa).

It belongs to the bacterial ribosomal protein bL9 family.

In terms of biological role, binds to the 23S rRNA. The chain is Large ribosomal subunit protein bL9 from Vibrio cholerae serotype O1 (strain ATCC 39541 / Classical Ogawa 395 / O395).